Reading from the N-terminus, the 788-residue chain is MTIYQFLRLFVLWACLPHFCCPELTFRRTPGIQQMTAESRAPRSDGKILHRQKRGWMWNQFFLLEEYTGSDYQYVGKLHSDQDKGDGSLKYILSGDGAGTLFIIDEKTGDIHATRRIDREEKAFYTLRAQAINRRTLRPVEPESEFVIKIHDINDNEPTFPEEIYTASVPEMSVVGTSVVQVTATDADDPSYGNSARVIYSILQGQPYFSVEPETGIIRTALPNMNRENKEQYQVVIQAKDMGGQMGGLSGTTTVNITLTDVNDNPPRFPQNTIHLRVLESSPVGTAVGSVKATDADTGKNAEVDYRIIDGDGTDMFDIITEKDTQEGIITVKKPLDYENRRLYTLKVEAENTHVDPRFYYLGPFKDTTIVKISIEDVDEPPVFSRSSYLFEVHEDIEVGTIIGTVMARDPDSTSSPIRFTLDRHTDLDRIFNIHSGNGSLYTSKPLDRELSQWHNLTVIAAEINNPKETTRVSVFVRILDVNDNAPQFAVFYDTFVCENARPGQLIQTISAVDKDDPLGGQKFFFSLAAVNPNFTVQDNEDNTARILTRKNGFNRHEISTYLLPVVISDNDYPIQSSTGTLTIRVCACDSQGNMQSCSAEALLLPAGLSTGALIAILLCIIILLVIVVLFAALKRQRKKEPLILSKEDIRDNIVSYNDEGGGEEDTQAFDIGTLRNPAAIEEKKLRRDIIPETLFIPRRTPTAPDNTDVRDFINERLKEHDLDPTAPPYDSLATYAYEGNDSVAESLSSLESGTTEGDQNYDYLREWGPRFNKLAEMYGGGESDKDA.

The signal sequence occupies residues 1-22 (MTIYQFLRLFVLWACLPHFCCP). The propeptide occupies 23–54 (ELTFRRTPGIQQMTAESRAPRSDGKILHRQKR). Over 23 to 613 (ELTFRRTPGI…LLPAGLSTGA (591 aa)) the chain is Extracellular. Cadherin domains follow at residues 56-160 (WMWN…EPTF), 161-269 (PEEI…PPRF), 270-384 (PQNT…PPVF), 385-489 (SRSS…APQF), and 489-603 (FAVF…AEAL). N-linked (GlcNAc...) asparagine glycosylation occurs at asparagine 256. N-linked (GlcNAc...) asparagine glycans are attached at residues asparagine 456 and asparagine 534. The chain crosses the membrane as a helical span at residues 614–634 (LIAILLCIIILLVIVVLFAAL). The Cytoplasmic portion of the chain corresponds to 635–788 (KRQRKKEPLI…YGGGESDKDA (154 aa)). Residue serine 784 is modified to Phosphoserine.

It localises to the cell membrane. Functionally, cadherins are calcium-dependent cell adhesion proteins. They preferentially interact with themselves in a homophilic manner in connecting cells; cadherins may thus contribute to the sorting of heterogeneous cell types. This Mus musculus (Mouse) protein is Cadherin-10 (Cdh10).